Reading from the N-terminus, the 64-residue chain is DNA gyrase inhibitor YacG (64 aa).

Positions 9, 12, 28, and 32 each coordinate Zn(2+). The disordered stretch occupies residues 45–64; it reads NAIAGAPDMSDSDGWSEDQY. The segment covering 54-64 has biased composition (acidic residues); sequence SDSDGWSEDQY.

This sequence belongs to the DNA gyrase inhibitor YacG family. As to quaternary structure, interacts with GyrB. The cofactor is Zn(2+).

Inhibits all the catalytic activities of DNA gyrase by preventing its interaction with DNA. Acts by binding directly to the C-terminal domain of GyrB, which probably disrupts DNA binding by the gyrase. This chain is DNA gyrase inhibitor YacG, found in Vibrio parahaemolyticus serotype O3:K6 (strain RIMD 2210633).